We begin with the raw amino-acid sequence, 353 residues long: Nucleotide-binding protein sce5766 (353 aa).

ATP is bound at residue 27-34 (GLSGAGKS). GTP is bound at residue 76 to 79 (DVRV). A disordered region spans residues 310-353 (SGVPSGVGEGMAGAPGVDLRLAQPGATPSEPRPASDTSVTGGER). The span at 344 to 353 (SDTSVTGGER) shows a compositional bias: polar residues.

It belongs to the RapZ-like family.

Displays ATPase and GTPase activities. The sequence is that of Nucleotide-binding protein sce5766 from Sorangium cellulosum (strain So ce56) (Polyangium cellulosum (strain So ce56)).